Consider the following 367-residue polypeptide: MSLSRVSVTAVRNLHPVTFSPSPRINILYGANGSGKTSVLEAIHLLGLARSFRSTRLLPVIQYEQLACTVFGQVELAEGGHSALGISRDRQGEFQIRIDGQNARSAAQLAEILPLQLINPDSFRLLEGAPKIRRQFLDWGVFHVEPRFMATWQRLQKALRQRNSWLRHGTLDAVSQAVWDRELCQASAEIDEYRRAYIKALKPVFEQTLSELVELEGLTLSYYRGWDKDRELSAVLAGSVQRDQQMGHTQAGPQRADLRLRLGAHNAADILSRGQQKLVVCALRIAQGHLVSQARRGQCIYLVDDLPSELDESHRRALCRLLEDLRCQVFITCVDHELLREGWQTETPVALFHVEQGRITQTHDHRE.

Residue 30-37 (GANGSGKT) coordinates ATP.

The protein belongs to the RecF family.

It localises to the cytoplasm. The RecF protein is involved in DNA metabolism; it is required for DNA replication and normal SOS inducibility. RecF binds preferentially to single-stranded, linear DNA. It also seems to bind ATP. This chain is DNA replication and repair protein RecF, found in Pseudomonas fluorescens (strain Pf0-1).